We begin with the raw amino-acid sequence, 181 residues long: MGLFASKLFSNLFGNKEMRILMVGLDGAGKTTVLYKLKLGEVITTIPTIGFNVETVQYKNISFTVWDVGGQDRIRSLWRHYYRNTEGVIFVVDSNDRSRIGEAREVMQRMLNEDELRNAAWLVFANKQDLPEAMSAAEITEKLGLHSIRNRPWFIQATCATSGEGLYEGLEWLSNSLKNST.

Glycine 2 is lipidated: N-myristoyl glycine. GTP-binding positions include 25–32 (LDGAGKTT), threonine 48, glycine 70, 126–129 (NKQD), and 160–161 (AT). Lysine 127 participates in a covalent cross-link: Glycyl lysine isopeptide (Lys-Gly) (interchain with G-Cter in ubiquitin).

This sequence belongs to the small GTPase superfamily. Arf family. Interacts with RUD3. Interacts with VPS13 (via C-terminal part); the interaction is direct.

It is found in the golgi apparatus. The enzyme catalyses GTP + H2O = GDP + phosphate + H(+). In terms of biological role, GTP-binding protein involved in Golgi vesicle trafficking. May modulate vesicle budding and uncoating within the Golgi apparatus. May recruit the lipid transfer protein VPS13 to Golgi membranes. Recruits polyadenylate-binding protein PAB1 to COPI vesicles, and this is required for correct localization of the asymmetrically distributed ASH1 mRNA. This Saccharomyces cerevisiae (strain ATCC 204508 / S288c) (Baker's yeast) protein is ADP-ribosylation factor 1 (ARF1).